Consider the following 179-residue polypeptide: ATP synthase subunit delta (179 aa).

The protein belongs to the ATPase delta chain family. In terms of assembly, F-type ATPases have 2 components, F(1) - the catalytic core - and F(0) - the membrane proton channel. F(1) has five subunits: alpha(3), beta(3), gamma(1), delta(1), epsilon(1). F(0) has three main subunits: a(1), b(2) and c(10-14). The alpha and beta chains form an alternating ring which encloses part of the gamma chain. F(1) is attached to F(0) by a central stalk formed by the gamma and epsilon chains, while a peripheral stalk is formed by the delta and b chains.

Its subcellular location is the cell membrane. In terms of biological role, f(1)F(0) ATP synthase produces ATP from ADP in the presence of a proton or sodium gradient. F-type ATPases consist of two structural domains, F(1) containing the extramembraneous catalytic core and F(0) containing the membrane proton channel, linked together by a central stalk and a peripheral stalk. During catalysis, ATP synthesis in the catalytic domain of F(1) is coupled via a rotary mechanism of the central stalk subunits to proton translocation. Its function is as follows. This protein is part of the stalk that links CF(0) to CF(1). It either transmits conformational changes from CF(0) to CF(1) or is implicated in proton conduction. This is ATP synthase subunit delta from Staphylococcus carnosus (strain TM300).